We begin with the raw amino-acid sequence, 313 residues long: Porphobilinogen deaminase (313 aa).

Position 249 is an S-(dipyrrolylmethanemethyl)cysteine (cysteine 249).

The protein belongs to the HMBS family. As to quaternary structure, monomer. It depends on dipyrromethane as a cofactor.

It carries out the reaction 4 porphobilinogen + H2O = hydroxymethylbilane + 4 NH4(+). It participates in porphyrin-containing compound metabolism; protoporphyrin-IX biosynthesis; coproporphyrinogen-III from 5-aminolevulinate: step 2/4. Its function is as follows. Tetrapolymerization of the monopyrrole PBG into the hydroxymethylbilane pre-uroporphyrinogen in several discrete steps. The chain is Porphobilinogen deaminase from Paracoccus denitrificans (strain Pd 1222).